Here is a 938-residue protein sequence, read N- to C-terminus: Nitrate reductase (938 aa).

The 4Fe-4S Mo/W bis-MGD-type domain maps to 1–64 (MSVVQSSCAY…RLLDSLAQPN (64 aa)). Positions 8, 11, 15, and 50 each coordinate [4Fe-4S] cluster.

The protein belongs to the prokaryotic molybdopterin-containing oxidoreductase family. NasA/NapA/NarB subfamily. It depends on [4Fe-4S] cluster as a cofactor. Mo-bis(molybdopterin guanine dinucleotide) serves as cofactor.

Its subcellular location is the cytoplasm. It catalyses the reaction nitrate + a quinol = a quinone + nitrite + H2O. Its pathway is nitrogen metabolism; nitrate reduction (assimilation). Its function is as follows. Nitrate reductase is a key enzyme involved in the first step of nitrate assimilation in plants, fungi and bacteria. This Shewanella frigidimarina (strain NCIMB 400) protein is Nitrate reductase.